The primary structure comprises 269 residues: uncharacterized protein (269 aa).

The 76-residue stretch at 14 to 89 folds into the ACT domain; the sequence is FEYEIQVNRP…KLREPRLRDR (76 aa).

This is an uncharacterized protein from Bacillus subtilis (strain 168).